The chain runs to 435 residues: Trigger factor (435 aa).

A PPIase FKBP-type domain is found at 163–248; sequence DDITLIDFTG…INEIKRKELA (86 aa).

The protein belongs to the FKBP-type PPIase family. Tig subfamily.

It localises to the cytoplasm. The enzyme catalyses [protein]-peptidylproline (omega=180) = [protein]-peptidylproline (omega=0). In terms of biological role, involved in protein export. Acts as a chaperone by maintaining the newly synthesized protein in an open conformation. Functions as a peptidyl-prolyl cis-trans isomerase. The sequence is that of Trigger factor from Desulforamulus reducens (strain ATCC BAA-1160 / DSM 100696 / MI-1) (Desulfotomaculum reducens).